Consider the following 185-residue polypeptide: Prenylated Rab acceptor protein 1 (185 aa).

Residues 1–78 (MAAQKDQQKD…RNVEYYQSNY (78 aa)) are Cytoplasmic-facing. The tract at residues 30-54 (AGREWLERRRATIRPWGSFVDQRRF) is required for interaction with prenylated RAB3A and VAMP2. Helical transmembrane passes span 79–94 (VFVF…VTSP) and 95–112 (MLLV…ILYL). Residues 113 to 131 (RTLQSKFVLFGREVSPAHQ) lie on the Cytoplasmic side of the membrane. The next 2 helical transmembrane spans lie at 132–148 (YALA…LAGA) and 149–165 (GSAV…VIGS). A required for interaction with GDI1 region spans residues 165 to 185 (SHAAFHQIEAVDGEELQMEPV). Residues 166–185 (HAAFHQIEAVDGEELQMEPV) are Cytoplasmic-facing. The interval 175–185 (VDGEELQMEPV) is required for interaction with prenylated RAB3A and VAMP2. Positions 175–185 (VDGEELQMEPV) are homodimerization.

Belongs to the PRA1 family. As to quaternary structure, homodimer. Interacts with VAMP2 (synaptobrevin-2), prenylated Rab proteins, GDI1, NRDG1 and PCLO.

The protein resides in the cell membrane. It localises to the cytoplasm. Its subcellular location is the golgi apparatus. It is found in the cytoplasmic vesicle. The protein localises to the secretory vesicle. The protein resides in the synaptic vesicle. General Rab protein regulator required for vesicle formation from the Golgi complex. May control vesicle docking and fusion by mediating the action of Rab GTPases to the SNARE complexes. In addition it inhibits the removal of Rab GTPases from the membrane by GDI1. The protein is Prenylated Rab acceptor protein 1 (RABAC1) of Sus scrofa (Pig).